The following is a 450-amino-acid chain: Signal recognition particle protein (450 aa).

GTP-binding positions include 107-114, 190-194, and 248-251; these read GLQGSGKT, DTAGR, and TKTD.

The protein belongs to the GTP-binding SRP family. SRP54 subfamily. Part of the signal recognition particle protein translocation system, which is composed of SRP and FtsY. SRP is a ribonucleoprotein composed of Ffh and a 4.5S RNA molecule.

The protein localises to the cytoplasm. The enzyme catalyses GTP + H2O = GDP + phosphate + H(+). Its function is as follows. Involved in targeting and insertion of nascent membrane proteins into the cytoplasmic membrane. Binds to the hydrophobic signal sequence of the ribosome-nascent chain (RNC) as it emerges from the ribosomes. The SRP-RNC complex is then targeted to the cytoplasmic membrane where it interacts with the SRP receptor FtsY. Interaction with FtsY leads to the transfer of the RNC complex to the Sec translocase for insertion into the membrane, the hydrolysis of GTP by both Ffh and FtsY, and the dissociation of the SRP-FtsY complex into the individual components. The protein is Signal recognition particle protein of Buchnera aphidicola subsp. Baizongia pistaciae (strain Bp).